A 392-amino-acid polypeptide reads, in one-letter code: MKPTGRGYLLLDAHPVGCFRSVELMRAEVPVPEKPPARRPTALVIGSSSGYGLASTIAGLVRYGIDGVGIGLERPAGHRSATAGWYRTVATDAIARELGADFSFRNADAFADTTKTETLDLLAERFGGVDYLIYSVAAPRRTDPRSGTTYQSVLKPLGAPHTTRNLEFADDGAAQVREVTVAPATEAEAAATVGVMGGEDWSRWITALAERGLLRSGFRTVALTYIGSPLTSAIYRGGTIGAAKAHLESTARALTERLAAVDGRAFTSVNGALVTQALTAIPGIPLYVSLLRGVLGDRFPSPVAQSLDLWHQLTARRPDVDDSGRIRLDRWELSEPVQAAVAERWRSITPETVTALADTAWFRAQCRALYGFDVPGVDYTVPVATDLPWPES.

NAD(+) is bound by residues 46 to 51 (GSSSGY), 72 to 73 (LE), 108 to 109 (DA), and 136 to 137 (VA). Residue tyrosine 225 coordinates substrate. Tyrosine 235 acts as the Proton donor in catalysis. NAD(+) contacts are provided by residues lysine 244 and 273–275 (LVT).

This sequence belongs to the TER reductase family. Monomer.

The catalysed reaction is a 2,3-saturated acyl-[ACP] + NAD(+) = a (2E)-enoyl-[ACP] + NADH + H(+). It participates in lipid metabolism; fatty acid biosynthesis. In terms of biological role, involved in the final reduction of the elongation cycle of fatty acid synthesis (FAS II). Catalyzes the reduction of a carbon-carbon double bond in an enoyl moiety that is covalently linked to an acyl carrier protein (ACP). This Streptomyces avermitilis (strain ATCC 31267 / DSM 46492 / JCM 5070 / NBRC 14893 / NCIMB 12804 / NRRL 8165 / MA-4680) protein is Enoyl-[acyl-carrier-protein] reductase [NADH].